A 94-amino-acid polypeptide reads, in one-letter code: Trp operon repressor homolog (94 aa).

A DNA-binding region spans residues 58-81 (QREIAEKYGVSIAQITRGSNALKG).

It belongs to the TrpR family. As to quaternary structure, homodimer.

It is found in the cytoplasm. In terms of biological role, this protein is an aporepressor. When complexed with L-tryptophan it binds the operator region of the trp operon and prevents the initiation of transcription. This chain is Trp operon repressor homolog, found in Chlamydia trachomatis serovar L2 (strain ATCC VR-902B / DSM 19102 / 434/Bu).